The primary structure comprises 501 residues: MTSTSDTKVCKNQGGLLEIKMEEECKYTTRQDRNLQKNTYNRDVFRKYFRQFCYQETSGPREALSRLRELCRQWLRPDLNSKEQILELLVLEQFLTILPGELQAWVQEQNPESVEEVVTVLEDLERELDELGYRASVQTEEQVTFQEVKPLATEQKPSVSLQFVKAKPGCELAGREAQEEQVSGVETGNEPRNVTLKQGLWEGTEAEQNPASRLAKDALECEEAHNPGEESSGISHEDSQPLRNENGVNSPANSEYAKHQSICPGRKVHGCDECGKSFTQHSRLIEHKRVHTGDRPYKCEVCGKTFRWRTVLIRHKVVHTGEKPYKCNECGRAFGQWSALNQHQRLHSGEKHYHCNECGKAFCQKAGLFHHLKSHRRNRPYQCLQCNKSFNRRSTLSQHQGVHTGAKPYECNDCGKAFVYNSSLATHQETHHKEKPFTQSGPIQQQRNHTKEKPYKCSVCGKAFIQKISLIEHEQIHTGERPYKCAEGGKAFIQMSELTEH.

Glycyl lysine isopeptide (Lys-Gly) (interchain with G-Cter in SUMO2) cross-links involve residues Lys20 and Lys26. The SCAN box domain occupies 51 to 132 (QFCYQETSGP…DLERELDELG (82 aa)). The interval 175–194 (REAQEEQVSGVETGNEPRNV) is disordered. Residues 180 to 194 (EQVSGVETGNEPRNV) are compositionally biased toward polar residues. Lys197 is covalently cross-linked (Glycyl lysine isopeptide (Lys-Gly) (interchain with G-Cter in SUMO2)). Residues 223–255 (EAHNPGEESSGISHEDSQPLRNENGVNSPANSE) are disordered. The segment covering 241-253 (PLRNENGVNSPAN) has biased composition (polar residues). 6 consecutive C2H2-type zinc fingers follow at residues 269–291 (HGCD…KRVH), 297–319 (YKCE…KVVH), 325–347 (YKCN…QRLH), 353–375 (YHCN…LKSH), 381–403 (YQCL…QGVH), and 409–431 (YECN…QETH). The tract at residues 429 to 450 (ETHHKEKPFTQSGPIQQQRNHT) is disordered. Positions 437-447 (FTQSGPIQQQR) are enriched in polar residues. The segment at 455-477 (YKCSVCGKAFIQKISLIEHEQIH) adopts a C2H2-type 7 zinc-finger fold. The segment at 483–501 (YKCAEGGKAFIQMSELTEH) adopts a C2H2-type 8; degenerate zinc-finger fold.

The protein belongs to the krueppel C2H2-type zinc-finger protein family. Testis specific.

Its subcellular location is the nucleus. Functionally, may be involved in transcriptional regulation. The sequence is that of Zinc finger and SCAN domain-containing protein 12 (Zscan12) from Mus musculus (Mouse).